Here is a 434-residue protein sequence, read N- to C-terminus: Histidine--tRNA ligase (434 aa).

The protein belongs to the class-II aminoacyl-tRNA synthetase family. Homodimer.

Its subcellular location is the cytoplasm. It catalyses the reaction tRNA(His) + L-histidine + ATP = L-histidyl-tRNA(His) + AMP + diphosphate + H(+). This chain is Histidine--tRNA ligase, found in Latilactobacillus sakei subsp. sakei (strain 23K) (Lactobacillus sakei subsp. sakei).